The primary structure comprises 122 residues: Urease subunit beta (122 aa).

The protein belongs to the urease beta subunit family. In terms of assembly, heterotrimer of UreA (gamma), UreB (beta) and UreC (alpha) subunits. Three heterotrimers associate to form the active enzyme.

It is found in the cytoplasm. It carries out the reaction urea + 2 H2O + H(+) = hydrogencarbonate + 2 NH4(+). It participates in nitrogen metabolism; urea degradation; CO(2) and NH(3) from urea (urease route): step 1/1. The protein is Urease subunit beta of Lysinibacillus sphaericus (strain C3-41).